The chain runs to 506 residues: Maturase K (506 aa).

The protein belongs to the intron maturase 2 family. MatK subfamily.

The protein localises to the plastid. It localises to the chloroplast. Usually encoded in the trnK tRNA gene intron. Probably assists in splicing its own and other chloroplast group II introns. This chain is Maturase K, found in Prunus dulcis (Almond).